The chain runs to 196 residues: GTP cyclohydrolase-2 (196 aa).

49–53 (RVHSE) is a binding site for GTP. Zn(2+)-binding residues include cysteine 54, cysteine 65, and cysteine 67. GTP-binding positions include glutamine 70, 92–94 (EGR), and threonine 114. Aspartate 126 acts as the Proton acceptor in catalysis. Arginine 128 (nucleophile) is an active-site residue. Residues threonine 149 and lysine 154 each contribute to the GTP site.

Belongs to the GTP cyclohydrolase II family. Homodimer. Requires Zn(2+) as cofactor.

The catalysed reaction is GTP + 4 H2O = 2,5-diamino-6-hydroxy-4-(5-phosphoribosylamino)-pyrimidine + formate + 2 phosphate + 3 H(+). The protein operates within cofactor biosynthesis; riboflavin biosynthesis; 5-amino-6-(D-ribitylamino)uracil from GTP: step 1/4. Its function is as follows. Catalyzes the conversion of GTP to 2,5-diamino-6-ribosylamino-4(3H)-pyrimidinone 5'-phosphate (DARP), formate and pyrophosphate. The polypeptide is GTP cyclohydrolase-2 (Yersinia pestis).